Consider the following 336-residue polypeptide: Dihydroorotate dehydrogenase (quinone) (336 aa).

FMN is bound by residues 62 to 66 (AGLDK) and Thr-86. Position 66 (Lys-66) interacts with substrate. 111–115 (NRMGF) contacts substrate. Positions 139 and 172 each coordinate FMN. Asn-172 is a substrate binding site. Ser-175 acts as the Nucleophile in catalysis. Asn-177 serves as a coordination point for substrate. The FMN site is built by Lys-217 and Thr-245. Residue 246-247 (NT) participates in substrate binding. FMN is bound by residues Gly-268, Gly-297, and 318 to 319 (YS).

The protein belongs to the dihydroorotate dehydrogenase family. Type 2 subfamily. As to quaternary structure, monomer. It depends on FMN as a cofactor.

It is found in the cell membrane. The catalysed reaction is (S)-dihydroorotate + a quinone = orotate + a quinol. Its pathway is pyrimidine metabolism; UMP biosynthesis via de novo pathway; orotate from (S)-dihydroorotate (quinone route): step 1/1. In terms of biological role, catalyzes the conversion of dihydroorotate to orotate with quinone as electron acceptor. The polypeptide is Dihydroorotate dehydrogenase (quinone) (Shigella flexneri serotype 5b (strain 8401)).